The sequence spans 125 residues: MRIAGVNLPLNKHAVIALTHVYGIGKTSAKSILQRAGIAPERKISELNDEEAHAIREIIAEDYKVEGQARGEQQLAVKRLMDIGCYRGLRHRRSLPVRGQRTQTNARTRKGKRKTVAGKKKATKK.

A disordered region spans residues 92 to 125 (RRSLPVRGQRTQTNARTRKGKRKTVAGKKKATKK). A compositionally biased stretch (basic residues) spans 107–125 (RTRKGKRKTVAGKKKATKK).

Belongs to the universal ribosomal protein uS13 family. As to quaternary structure, part of the 30S ribosomal subunit. Forms a loose heterodimer with protein S19. Forms two bridges to the 50S subunit in the 70S ribosome.

Functionally, located at the top of the head of the 30S subunit, it contacts several helices of the 16S rRNA. In the 70S ribosome it contacts the 23S rRNA (bridge B1a) and protein L5 of the 50S subunit (bridge B1b), connecting the 2 subunits; these bridges are implicated in subunit movement. Contacts the tRNAs in the A and P-sites. In Chlorobium phaeobacteroides (strain DSM 266 / SMG 266 / 2430), this protein is Small ribosomal subunit protein uS13.